Consider the following 269-residue polypeptide: Pertussis toxin subunit 1 homolog (269 aa).

Positions 1–34 (MRCTRAIRQTARTGWLTWLAILAVTAPVTSPAWA) are cleaved as a signal peptide.

It belongs to the bacterial exotoxin subunit A family.

The protein is Pertussis toxin subunit 1 homolog (ptxA) of Bordetella bronchiseptica (strain ATCC BAA-588 / NCTC 13252 / RB50) (Alcaligenes bronchisepticus).